The sequence spans 690 residues: Protease 2 (690 aa).

Residues Ser534, Asp619, and His654 each act as charge relay system in the active site.

This sequence belongs to the peptidase S9A family.

It catalyses the reaction Hydrolysis of -Arg-|-Xaa- and -Lys-|-Xaa- bonds in oligopeptides, even when P1' residue is proline.. Cleaves peptide bonds on the C-terminal side of lysyl and argininyl residues. The sequence is that of Protease 2 (ptrB) from Moraxella lacunata.